A 154-amino-acid chain; its full sequence is AP-1 complex subunit sigma-3 (154 aa).

It belongs to the adaptor complexes small subunit family. As to quaternary structure, adaptor protein complex 1 (AP-1) is a heterotetramer composed of two large adaptins (gamma-type subunit AP1G1 and beta-type subunit AP1B1), a medium adaptin (mu-type subunit AP1M1 or AP1M2) and a small adaptin (sigma-type subunit AP1S1 or AP1S2 or AP1S3).

Its subcellular location is the golgi apparatus. The protein localises to the cytoplasmic vesicle membrane. The protein resides in the membrane. It is found in the clathrin-coated pit. In terms of biological role, subunit of clathrin-associated adaptor protein complex 1 that plays a role in protein sorting in the late-Golgi/trans-Golgi network (TGN) and/or endosomes. The AP complexes mediate both the recruitment of clathrin to membranes and the recognition of sorting signals within the cytosolic tails of transmembrane cargo molecules. Involved in TLR3 trafficking. The chain is AP-1 complex subunit sigma-3 (Ap1s3) from Mus musculus (Mouse).